We begin with the raw amino-acid sequence, 90 residues long: Small ribosomal subunit protein uS15c (90 aa).

It belongs to the universal ribosomal protein uS15 family. In terms of assembly, part of the 30S ribosomal subunit.

It is found in the plastid. Its subcellular location is the chloroplast. This Mesostigma viride (Green alga) protein is Small ribosomal subunit protein uS15c (rps15).